The primary structure comprises 557 residues: MAAQGFLLIVTFLLVLMVLARPLGSGLARLINDIPLPGTTGVERVLFRVLGVSGLEMNWKQYLSAILGLNMLGLAVLFFMLLGQHYLPLNPQQLPGLSWDLALNTAVSFVTNTNWQSYSGETTLSYFSQMAGLTVQNFLSAASGIAVIFALIRAFTRQSMSTLGNAWVDLLRITLWVLAPVALLIALFFIQQGALQNFLPYQSVTTVEGAQQLLPMGPVASQEAIKMLGTNGGGFFNANSSHPFENPTALTNFVQMLAIFVIPTALCFAFGEVAGERRQGRMLLWAMSVIFVICVGVVMWAEVQGNPHLLALGADSSINMEGKESRFGVLVSSLFAVVTTAASCGAVIAMHDSFTALGGMVPMWLMQIGEVVFGGVGSGLYGMMLFVLLAVFIAGLMIGRTPEYLGKKIDVREMKLTALAILVTPTLVLMGAALAMMTDAGRSAMLNPGPHGFSEVLYAVSSAANNNGSAFAGLSANSPFWNCLLAFCMFVGRFGVIIPVMAIAGSLVSKKSQPASSGTLPTHGPLFVGLLIGTVLLVGALTFIPALALGPVAEYLS.

12 consecutive transmembrane segments (helical) span residues 5–25 (GFLLIVTFLLVLMVLARPLGS), 63–83 (LSAILGLNMLGLAVLFFMLLG), 132–152 (GLTVQNFLSAASGIAVIFALI), 170–190 (LLRITLWVLAPVALLIALFFI), 253–273 (FVQMLAIFVIPTALCFAFGEV), 283–303 (LLWAMSVIFVICVGVVMWAEV), 329–349 (VLVSSLFAVVTTAASCGAVIA), 356–376 (ALGGMVPMWLMQIGEVVFGGV), 379–399 (GLYGMMLFVLLAVFIAGLMIG), 416–436 (LTALAILVTPTLVLMGAALAM), 484–504 (LLAFCMFVGRFGVIIPVMAIA), and 526–546 (LFVGLLIGTVLLVGALTFIPA).

The protein belongs to the KdpA family. In terms of assembly, the system is composed of three essential subunits: KdpA, KdpB and KdpC.

It localises to the cell inner membrane. Functionally, part of the high-affinity ATP-driven potassium transport (or Kdp) system, which catalyzes the hydrolysis of ATP coupled with the electrogenic transport of potassium into the cytoplasm. This subunit binds the periplasmic potassium ions and delivers the ions to the membrane domain of KdpB through an intramembrane tunnel. The protein is Potassium-transporting ATPase potassium-binding subunit of Escherichia fergusonii (strain ATCC 35469 / DSM 13698 / CCUG 18766 / IAM 14443 / JCM 21226 / LMG 7866 / NBRC 102419 / NCTC 12128 / CDC 0568-73).